Reading from the N-terminus, the 358-residue chain is uncharacterized protein (358 aa).

Residue A207–T214 coordinates ATP.

This is an uncharacterized protein from Bacillus subtilis (strain 168).